Reading from the N-terminus, the 281-residue chain is MAQKIIKVRDIEIANDKPFVLFGGINVLESRDLAMQACEEYVRVTEKLGIPYVFKASFDKANRSSITSFRGPGLEEGMKIFEEVKKTFGVPVITDVHEPHQAAAVAEVCDIIQLPAFLSRQTDLVVAMAKTGAVINIKKAQFLAPQEMKHILTKCEEAGNDQLILCERGSSFGYNNLVVDMLGFGIMKQFEYPVFFDVTHALQMPGGRADSAGGRRAQVTDLAKAGMSQGLAGLFLEAHPDPENAKCDGPCALRLNKLEPFLSQLKQLDDLVKSFPPIETA.

Belongs to the KdsA family.

It localises to the cytoplasm. It catalyses the reaction D-arabinose 5-phosphate + phosphoenolpyruvate + H2O = 3-deoxy-alpha-D-manno-2-octulosonate-8-phosphate + phosphate. The protein operates within carbohydrate biosynthesis; 3-deoxy-D-manno-octulosonate biosynthesis; 3-deoxy-D-manno-octulosonate from D-ribulose 5-phosphate: step 2/3. Its pathway is bacterial outer membrane biogenesis; lipopolysaccharide biosynthesis. The sequence is that of 2-dehydro-3-deoxyphosphooctonate aldolase from Ectopseudomonas mendocina (strain ymp) (Pseudomonas mendocina).